A 378-amino-acid chain; its full sequence is Cobalt-precorrin-5B C(1)-methyltransferase (378 aa).

Belongs to the CbiD family.

It carries out the reaction Co-precorrin-5B + S-adenosyl-L-methionine = Co-precorrin-6A + S-adenosyl-L-homocysteine. Its pathway is cofactor biosynthesis; adenosylcobalamin biosynthesis; cob(II)yrinate a,c-diamide from sirohydrochlorin (anaerobic route): step 6/10. Catalyzes the methylation of C-1 in cobalt-precorrin-5B to form cobalt-precorrin-6A. The polypeptide is Cobalt-precorrin-5B C(1)-methyltransferase (Thermoplasma volcanium (strain ATCC 51530 / DSM 4299 / JCM 9571 / NBRC 15438 / GSS1)).